Reading from the N-terminus, the 362-residue chain is Probable choline-phosphate cytidylyltransferase (362 aa).

Over residues 1–37 (MGEEGIKINDTHKRRIDEVEPSEKEDNVERQTKKYNF) the composition is skewed to basic and acidic residues. A disordered region spans residues 1 to 79 (MGEEGIKIND…VSPVEEEPRD (79 aa)). CTP is bound by residues 109–117 (VFDLFHIGH) and lysine 147. Residues lysine 147 and tryptophan 176 each coordinate substrate. CTP contacts are provided by residues 193–194 (HD), tyrosine 198, and 221–225 (RTEGV). Positions 308–362 (KNPLHGSSEPSSPGPTGFLGGINRWMQRRSSSHYDLPRVGNEIAASSSSATEENH) are disordered. 2 stretches are compositionally biased toward low complexity: residues 313-323 (GSSEPSSPGPT) and 351-362 (AASSSSATEENH). Serine 315 and serine 319 each carry phosphoserine. Residue threonine 323 is modified to Phosphothreonine. Serine 355 carries the phosphoserine modification.

The protein belongs to the cytidylyltransferase family.

The protein resides in the nucleus. It catalyses the reaction phosphocholine + CTP + H(+) = CDP-choline + diphosphate. The polypeptide is Probable choline-phosphate cytidylyltransferase (Schizosaccharomyces pombe (strain 972 / ATCC 24843) (Fission yeast)).